The following is a 209-amino-acid chain: Dephospho-CoA kinase (209 aa).

The DPCK domain occupies 13 to 209 (RIGLTGGIAT…AIEKVVVAEN (197 aa)). 21–26 (ATGKST) is an ATP binding site.

This sequence belongs to the CoaE family.

It is found in the cytoplasm. The enzyme catalyses 3'-dephospho-CoA + ATP = ADP + CoA + H(+). Its pathway is cofactor biosynthesis; coenzyme A biosynthesis; CoA from (R)-pantothenate: step 5/5. Its function is as follows. Catalyzes the phosphorylation of the 3'-hydroxyl group of dephosphocoenzyme A to form coenzyme A. In Synechococcus elongatus (strain ATCC 33912 / PCC 7942 / FACHB-805) (Anacystis nidulans R2), this protein is Dephospho-CoA kinase.